Consider the following 156-residue polypeptide: Arginine repressor (156 aa).

The protein belongs to the ArgR family.

The protein resides in the cytoplasm. The protein operates within amino-acid biosynthesis; L-arginine biosynthesis [regulation]. Its function is as follows. Regulates arginine biosynthesis genes. This is Arginine repressor from Citrobacter koseri (strain ATCC BAA-895 / CDC 4225-83 / SGSC4696).